Reading from the N-terminus, the 297-residue chain is MDAEGLALLLPPVTLAALVDSWLREDCPGLNYAALVSGAGPSQAALWAKSPGVLAGQPFFDAIFTQLNCQVSWFLPEGSKLVPVARVAEVRGPAHCLLLGERVALNTLARCSGIASAAAAAVEAARGAGWTGHVAGTRKTTPGFRLVEKYGLLVGGAASHRYDLGGLVMVKDNHVVAAGGVEKAVRAARQAADFTLKVEVECSSLQEAVQAAEAGADLVLLDNFKPEELHPTATVLKAQFPSVAVEASGGITLDNLPQFCGPHIDVISMGMLTQAAPALDFSLKLFAKEVAPVPKIH.

Positions leucine 8–proline 12 are important for hexamer formation. Quinolinate-binding positions include arginine 102, arginine 138–lysine 139, histidine 160–arginine 161, lysine 171, glutamate 201, aspartate 222, serine 248–glycine 250, and glycine 270.

The protein belongs to the NadC/ModD family. As to quaternary structure, hexamer formed by 3 homodimers.

The catalysed reaction is nicotinate beta-D-ribonucleotide + CO2 + diphosphate = quinolinate + 5-phospho-alpha-D-ribose 1-diphosphate + 2 H(+). The protein operates within cofactor biosynthesis; NAD(+) biosynthesis; nicotinate D-ribonucleotide from quinolinate: step 1/1. Activity toward QA is slightly repressed by phosphoribosylpyrophosphate (PRPP) in both a competitive and a non-competitive manner. Competitively inhibited by phthalic acid (PHT). Involved in the catabolism of quinolinic acid (QA). The chain is Nicotinate-nucleotide pyrophosphorylase [carboxylating] (QPRT) from Homo sapiens (Human).